The primary structure comprises 132 residues: MTMTDPIADMLSRVRNASNAHHDTVSMPSSKIKANIAEILKQEGYIANYTVEDAKVGKTLSLELKYSNTRERSIAGLRRVSKPGLRVYAKSTNLPQVLGGLGVAIISTSQGLLTDRQATEKGVGGEVLAYVW.

It belongs to the universal ribosomal protein uS8 family. Part of the 30S ribosomal subunit. Contacts proteins S5 and S12.

One of the primary rRNA binding proteins, it binds directly to 16S rRNA central domain where it helps coordinate assembly of the platform of the 30S subunit. In Corynebacterium glutamicum (strain R), this protein is Small ribosomal subunit protein uS8.